We begin with the raw amino-acid sequence, 116 residues long: NADH-ubiquinone oxidoreductase chain 3 (116 aa).

A run of 3 helical transmembrane segments spans residues 4–24 (FMVMIMLTLTLSSIMALLAFW), 56–76 (FFLVAILFLLFDLEIALLLPS), and 87–107 (FTLLWASLFVLLLTLGLIYEW).

This sequence belongs to the complex I subunit 3 family.

The protein resides in the mitochondrion membrane. The enzyme catalyses a ubiquinone + NADH + 5 H(+)(in) = a ubiquinol + NAD(+) + 4 H(+)(out). In terms of biological role, core subunit of the mitochondrial membrane respiratory chain NADH dehydrogenase (Complex I) that is believed to belong to the minimal assembly required for catalysis. Complex I functions in the transfer of electrons from NADH to the respiratory chain. The immediate electron acceptor for the enzyme is believed to be ubiquinone. This chain is NADH-ubiquinone oxidoreductase chain 3 (MT-ND3), found in Petromyzon marinus (Sea lamprey).